Reading from the N-terminus, the 683-residue chain is UvrABC system protein B (683 aa).

The segment at 1–29 is disordered; the sequence is MTDTGPLQPDRPDLDRPLSVDAPFEPAGD. One can recognise a Helicase ATP-binding domain in the interval 39–417; the sequence is AGFESGAEKQ…PGDYERDHSE (379 aa). An ATP-binding site is contributed by 52 to 59; sequence GVTGSGKT. A Beta-hairpin motif is present at residues 105–128; sequence YYDYYQPEAYVEQTDTYIDKDMSI. Residues 442-604 form the Helicase C-terminal domain; that stretch reads QVEDLIERIQ…EPRTIEKPVS (163 aa). The span at 587–603 shows a compositional bias: basic and acidic residues; sequence EFNAEHGHEPRTIEKPV. A disordered region spans residues 587–620; it reads EFNAEHGHEPRTIEKPVSETNLPGSSTDTDGVAD. Polar residues predominate over residues 604 to 615; the sequence is SETNLPGSSTDT. The UVR domain maps to 630-665; it reads EQLIERLETRMQEAADNLEFELAADIRDRIRELRET.

The protein belongs to the UvrB family. Forms a heterotetramer with UvrA during the search for lesions. Interacts with UvrC in an incision complex.

Its subcellular location is the cytoplasm. Functionally, the UvrABC repair system catalyzes the recognition and processing of DNA lesions. A damage recognition complex composed of 2 UvrA and 2 UvrB subunits scans DNA for abnormalities. Upon binding of the UvrA(2)B(2) complex to a putative damaged site, the DNA wraps around one UvrB monomer. DNA wrap is dependent on ATP binding by UvrB and probably causes local melting of the DNA helix, facilitating insertion of UvrB beta-hairpin between the DNA strands. Then UvrB probes one DNA strand for the presence of a lesion. If a lesion is found the UvrA subunits dissociate and the UvrB-DNA preincision complex is formed. This complex is subsequently bound by UvrC and the second UvrB is released. If no lesion is found, the DNA wraps around the other UvrB subunit that will check the other stand for damage. The protein is UvrABC system protein B of Natronomonas pharaonis (strain ATCC 35678 / DSM 2160 / CIP 103997 / JCM 8858 / NBRC 14720 / NCIMB 2260 / Gabara) (Halobacterium pharaonis).